A 198-amino-acid chain; its full sequence is Type 1 fimbriae regulatory protein FimE (198 aa).

The region spanning 2 to 184 is the Tyr recombinase domain; sequence SKRRYLTGKE…NAARFAGLWE (183 aa). Catalysis depends on residues arginine 41, lysine 66, histidine 136, arginine 139, and histidine 162. The active-site O-(3'-phospho-DNA)-tyrosine intermediate is tyrosine 171.

Belongs to the 'phage' integrase family.

Functionally, fimE is one of the 2 regulatory proteins which control the phase variation of type 1 fimbriae in E.coli. These proteins mediate the periodic inversion of a 300bp DNA segment that harbors the promoter for the fimbrial structural gene, fimA. FimE switches fimA off. The chain is Type 1 fimbriae regulatory protein FimE (fimE) from Escherichia coli O6:H1 (strain CFT073 / ATCC 700928 / UPEC).